The following is a 222-amino-acid chain: uncharacterized protein (222 aa).

Positions 1 to 27 (MSFTRRKFVLGMGTVIFFTGSASSLLA) form a signal peptide, tat-type signal. 3 4Fe-4S ferredoxin-type domains span residues 37–66 (YAMI…PAQG), 83–114 (TQYH…RDEQ), and 115–144 (GIVR…LNPV). Residues Cys-46, Cys-49, Cys-52, Cys-56, Cys-92, Cys-95, Cys-100, Cys-104, Cys-124, Cys-127, Cys-130, Cys-134, Cys-151, Cys-154, Cys-167, and Cys-171 each coordinate [4Fe-4S] cluster.

Post-translationally, predicted to be exported by the Tat system. The position of the signal peptide cleavage has not been experimentally proven.

This is an uncharacterized protein from Escherichia coli O157:H7.